The chain runs to 824 residues: Sphingomyelin phosphodiesterase 4 (824 aa).

The helical transmembrane segment at 777–797 threads the bilayer; sequence LAFLFIFYILGSLLSLGPLIC.

It depends on Mg(2+) as a cofactor.

The protein resides in the endoplasmic reticulum membrane. It is found in the golgi apparatus membrane. It localises to the nucleus envelope. Its subcellular location is the cell membrane. The protein localises to the sarcolemma. It carries out the reaction a sphingomyelin + H2O = phosphocholine + an N-acylsphing-4-enine + H(+). Its function is as follows. Catalyzes the hydrolysis of membrane sphingomyelin to form phosphorylcholine and ceramide. It has a relevant role in the homeostasis of membrane sphingolipids, thereby influencing membrane integrity, and endoplasmic reticulum organization and function. May sensitize cells to DNA damage-induced apoptosis. In Xenopus laevis (African clawed frog), this protein is Sphingomyelin phosphodiesterase 4 (smpd4).